We begin with the raw amino-acid sequence, 152 residues long: Transcriptional repressor NrdR (152 aa).

The segment at 3–33 (CSICKKGETSVVDSRPTEDGTAIRRRRLCVC) is a zinc-finger region. The 91-residue stretch at 48–138 (IMVVKKNGRK…VYRNFREEKD (91 aa)) folds into the ATP-cone domain.

Belongs to the NrdR family. It depends on Zn(2+) as a cofactor.

In terms of biological role, negatively regulates transcription of bacterial ribonucleotide reductase nrd genes and operons by binding to NrdR-boxes. This is Transcriptional repressor NrdR from Pelagibacter ubique (strain HTCC1062).